We begin with the raw amino-acid sequence, 185 residues long: uncharacterized protein (185 aa).

Transmembrane regions (helical) follow at residues 1 to 21 (MMKF…LTPE) and 111 to 131 (FLWI…AFAW).

To A.aeolicus aq_1900.

Its subcellular location is the cell membrane. This is an uncharacterized protein from Aquifex aeolicus (strain VF5).